We begin with the raw amino-acid sequence, 224 residues long: Paired immunoglobulin-like type 2 receptor beta (224 aa).

An N-terminal signal peptide occupies residues 1–28; it reads MALLISLPGGTPAMAQVLLLLSSGCLHA. Over 29 to 195 the chain is Extracellular; the sequence is GNSERYNRKN…NPSLMNLGAM (167 aa). Asn90, Asn107, and Asn154 each carry an N-linked (GlcNAc...) asparagine glycan. Residues 196–216 traverse the membrane as a helical segment; the sequence is VTMLLAKVLVIVLVYGWMIFL. At 217–224 the chain is on the cytoplasmic side; sequence RWKQRPAH.

As to quaternary structure, interacts with CD99. Probably associates with DAP12. Widely expressed with highest levels in spleen, liver and lung. Predominantly expressed by natural killer cells, macrophages, and granulocytes and dendritic cells (BM-DC).

The protein resides in the membrane. Its function is as follows. Paired receptors consist of highly related activating and inhibitory receptors and are widely involved in the regulation of the immune system. PILRB is thought to act as a cellular signaling activating receptor that associates with ITAM-bearing adapter molecules on the cell surface. Seems to associate with DAP12 and is a receptor for CD99. May be involved in target cell recognition by natural killer cells and in activation of dendritic cells. In Mus musculus (Mouse), this protein is Paired immunoglobulin-like type 2 receptor beta (Pilrb).